Reading from the N-terminus, the 174-residue chain is Peptidyl-prolyl cis-trans isomerase-like 1 (174 aa).

Positions 5–159 (SPTYVTFDTS…EEIKIHRARL (155 aa)) constitute a PPIase cyclophilin-type domain.

It belongs to the cyclophilin-type PPIase family. PPIL1 subfamily.

It catalyses the reaction [protein]-peptidylproline (omega=180) = [protein]-peptidylproline (omega=0). Functionally, PPIases accelerate the folding of proteins. It catalyzes the cis-trans isomerization of proline imidic peptide bonds in oligopeptides. The sequence is that of Peptidyl-prolyl cis-trans isomerase-like 1 (CYP1) from Cryptococcus neoformans var. neoformans serotype D (strain B-3501A) (Filobasidiella neoformans).